Here is a 299-residue protein sequence, read N- to C-terminus: Cancer/testis antigen family 47 member B1 (299 aa).

Over residues 1-10 (MSATGDRHPT) the composition is skewed to basic and acidic residues. Disordered stretches follow at residues 1–102 (MSAT…EGNE) and 215–299 (AREP…SKGT). 2 stretches are compositionally biased toward low complexity: residues 20 to 31 (QEGAQAEAAGAG) and 46 to 60 (VPAA…PVEG). Residues 81–101 (AEEDSDIGPATEEEEEEEEGN) are compositionally biased toward acidic residues. Residues 215–238 (AREPAEEAADEKPPEEAAEEKLTE) show a composition bias toward basic and acidic residues. Acidic residues-rich tracts occupy residues 239-251 (EATE…EPTS) and 268-281 (WDEE…EEEK). Residues 270-298 (EEAQDAAGEEEKEQEKEKDVENKVKNSKG) adopt a coiled-coil conformation. The segment covering 282-293 (EQEKEKDVENKV) has biased composition (basic and acidic residues).

This sequence belongs to the CT47 family.

In Homo sapiens (Human), this protein is Cancer/testis antigen family 47 member B1.